We begin with the raw amino-acid sequence, 636 residues long: Threonine--tRNA ligase (636 aa).

Residues M1 to T61 enclose the TGS domain. Residues D238–P528 form a catalytic region. Zn(2+) is bound by residues C329, H380, and H505.

It belongs to the class-II aminoacyl-tRNA synthetase family. In terms of assembly, homodimer. Requires Zn(2+) as cofactor.

It is found in the cytoplasm. It catalyses the reaction tRNA(Thr) + L-threonine + ATP = L-threonyl-tRNA(Thr) + AMP + diphosphate + H(+). Its function is as follows. Catalyzes the attachment of threonine to tRNA(Thr) in a two-step reaction: L-threonine is first activated by ATP to form Thr-AMP and then transferred to the acceptor end of tRNA(Thr). Also edits incorrectly charged L-seryl-tRNA(Thr). This Desulfatibacillum aliphaticivorans protein is Threonine--tRNA ligase.